The sequence spans 203 residues: Holliday junction branch migration complex subunit RuvA (203 aa).

The interval 1–64 is domain I; it reads MIGRLRGIII…EDAQLLYGFN (64 aa). The segment at 65–142 is domain II; the sequence is NKQERTLFKE…KGLHGDLFTP (78 aa). A flexible linker region spans residues 143–154; it reads AADLVLTSPASP. The interval 155–203 is domain III; the sequence is ATDDAEQEAVAALVALGYKPQEASRMVSKIARPDASSETLIREALHAAL.

The protein belongs to the RuvA family. Homotetramer. Forms an RuvA(8)-RuvB(12)-Holliday junction (HJ) complex. HJ DNA is sandwiched between 2 RuvA tetramers; dsDNA enters through RuvA and exits via RuvB. An RuvB hexamer assembles on each DNA strand where it exits the tetramer. Each RuvB hexamer is contacted by two RuvA subunits (via domain III) on 2 adjacent RuvB subunits; this complex drives branch migration. In the full resolvosome a probable DNA-RuvA(4)-RuvB(12)-RuvC(2) complex forms which resolves the HJ.

It localises to the cytoplasm. Functionally, the RuvA-RuvB-RuvC complex processes Holliday junction (HJ) DNA during genetic recombination and DNA repair, while the RuvA-RuvB complex plays an important role in the rescue of blocked DNA replication forks via replication fork reversal (RFR). RuvA specifically binds to HJ cruciform DNA, conferring on it an open structure. The RuvB hexamer acts as an ATP-dependent pump, pulling dsDNA into and through the RuvAB complex. HJ branch migration allows RuvC to scan DNA until it finds its consensus sequence, where it cleaves and resolves the cruciform DNA. This is Holliday junction branch migration complex subunit RuvA from Escherichia fergusonii (strain ATCC 35469 / DSM 13698 / CCUG 18766 / IAM 14443 / JCM 21226 / LMG 7866 / NBRC 102419 / NCTC 12128 / CDC 0568-73).